A 142-amino-acid chain; its full sequence is Neuritin (142 aa).

The signal sequence occupies residues 1-27; that stretch reads MGLKLNGRYISLILAVQIAYLVQAVRA. Gly-116 carries GPI-anchor amidated glycine lipidation. A propeptide spans 117–142 (removed in mature form); it reads AAGSLLPAFPVLLVSLSAALATWLSF.

This sequence belongs to the neuritin family. Component of the outer core of AMPAR complex. AMPAR complex consists of an inner core made of 4 pore-forming GluA/GRIA proteins (GRIA1, GRIA2, GRIA3 and GRIA4) and 4 major auxiliary subunits arranged in a twofold symmetry. One of the two pairs of distinct binding sites is occupied either by CNIH2, CNIH3 or CACNG2, CACNG3. The other harbors CACNG2, CACNG3, CACNG4, CACNG8 or GSG1L. This inner core of AMPAR complex is complemented by outer core constituents binding directly to the GluA/GRIA proteins at sites distinct from the interaction sites of the inner core constituents. Outer core constituents include at least PRRT1, PRRT2, CKAMP44/SHISA9, FRRS1L and NRN1. The proteins of the inner and outer core serve as a platform for other, more peripherally associated AMPAR constituents. Alone or in combination, these auxiliary subunits control the gating and pharmacology of the AMPAR complex and profoundly impact their biogenesis and protein processing.

The protein localises to the cell membrane. The protein resides in the synapse. Its function is as follows. Promotes neurite outgrowth and especially branching of neuritic processes in primary hippocampal and cortical cells. This is Neuritin (NRN1) from Homo sapiens (Human).